The chain runs to 150 residues: Mating pheromone 1 (150 aa).

The first 16 residues, 1–16 (MKAIFIILAILMVTQA), serve as a signal peptide directing secretion. A propeptide spanning residues 17–52 (FKMTSKVNTKLQSQIQSKFQSKNKLASTFQTSSKLK) is cleaved from the precursor.

The protein localises to the secreted. Functionally, mating ciliate pheromones (or gamones) are diffusible extracellular communication signals that distinguish different intraspecific classes of cells commonly referred to as 'mating types'. They prepare the latter for conjugation by changing their cell surface properties. This is Mating pheromone 1 from Euplotoides octocarinatus (Freshwater ciliate).